Reading from the N-terminus, the 469-residue chain is Glutamate--tRNA ligase (469 aa).

The 'HIGH' region motif lies at 11–21; sequence PSPTGFIHLGN. Residues 118-131 are compositionally biased toward basic and acidic residues; sequence GEKPRYDGTWRPEP. Positions 118–138 are disordered; the sequence is GEKPRYDGTWRPEPGKVLPEP. The 'KMSKS' region signature appears at 243 to 247; it reads KMSKR. Lys-246 is an ATP binding site.

Belongs to the class-I aminoacyl-tRNA synthetase family. Glutamate--tRNA ligase type 1 subfamily. As to quaternary structure, monomer.

The protein resides in the cytoplasm. The enzyme catalyses tRNA(Glu) + L-glutamate + ATP = L-glutamyl-tRNA(Glu) + AMP + diphosphate. Its function is as follows. Catalyzes the attachment of glutamate to tRNA(Glu) in a two-step reaction: glutamate is first activated by ATP to form Glu-AMP and then transferred to the acceptor end of tRNA(Glu). The polypeptide is Glutamate--tRNA ligase (Burkholderia vietnamiensis (strain G4 / LMG 22486) (Burkholderia cepacia (strain R1808))).